Here is a 48-residue protein sequence, read N- to C-terminus: Acidic phospholipase A2 (48 aa).

3 residues coordinate Ca(2+): Tyr-27, Gly-29, and Gly-31. Cys-28 and Cys-44 form a disulfide bridge. The active site involves His-47. Asp-48 serves as a coordination point for Ca(2+).

Belongs to the phospholipase A2 family. Group II subfamily. D49 sub-subfamily. In terms of assembly, monomer. It depends on Ca(2+) as a cofactor. In terms of tissue distribution, expressed by the venom gland.

The protein localises to the secreted. The catalysed reaction is a 1,2-diacyl-sn-glycero-3-phosphocholine + H2O = a 1-acyl-sn-glycero-3-phosphocholine + a fatty acid + H(+). Its activity is regulated as follows. Inhibited by EDTA. Inhibited by Ba(2+), Cu(+), Fe(2+) and Zn(2+) ions and, to a lesser extent, by Mn(2+) and Mg(2+) ions. In terms of biological role, snake venom phospholipase A2 (PLA2) that shows myotoxicity and induces paw edema in mice. Exhibits indirect hemolytic activity. Inhibits platelet aggregation induced by ADP and collagen. PLA2 catalyzes the calcium-dependent hydrolysis of the 2-acyl groups in 3-sn-phosphoglycerides. This Bothrops pauloensis (Neuwied's lancehead) protein is Acidic phospholipase A2.